A 578-amino-acid polypeptide reads, in one-letter code: Transcriptional regulator SKO1 (578 aa).

Residues 39 to 50 are compositionally biased toward polar residues; it reads NDAISDVNSVAT. Disordered regions lie at residues 39–169, 176–195, 287–311, and 342–489; these read NDAI…TQQP, MSGM…RSGL, LQQD…QPQP, and ESKP…RKNF. Residues 51–62 are compositionally biased toward low complexity; sequence SGSSINNGSSSN. Composition is skewed to polar residues over residues 70 to 80 and 107 to 132; these read NISSVNQQQGV and GGTT…TLGS. The span at 154–169 shows a compositional bias: low complexity; sequence PQQQQQPQQQQQTQQP. Polar residues predominate over residues 184–193; it reads LTPNESNIRS. Composition is skewed to low complexity over residues 287–296 and 356–370; these read LQQDQSSQAL and DLNP…TTTA. The span at 384-402 shows a compositional bias: basic residues; it reads KKAKVAKGKKKEPKSKSKG. The segment covering 415-443 has biased composition (basic and acidic residues); that stretch reads KPEDENVPGKENGNEENHKVEAESKEEHL. The segment covering 445–471 has biased composition (low complexity); it reads NGNETTTTKTNNTGNSSNGTTTTTTTK. One can recognise a bZIP domain in the interval 483 to 546; it reads DDKRKNFLER…LLLKEKHNIQ (64 aa). Positions 485-505 are basic motif; it reads KRKNFLERNRVAASKCRQRKK. A leucine-zipper region spans residues 508-515; it reads IQKMEEEL.

It belongs to the bZIP family. Undergoes HOG1-dependent phosphorylation after osmotic stress.

Its subcellular location is the nucleus. Transcription repressor involved in cell wall damage response. Regulates 79 caspofungin-responsive genes, including several cell wall biogenesis genes such as CRH11, MNN2, and SKN1. Also controls the expression of pathogenesis and hyphal related genes and represses the yeast-to-hypha transition. Mediates the response to oxidative stress. The polypeptide is Transcriptional regulator SKO1 (SKO1) (Candida albicans (strain SC5314 / ATCC MYA-2876) (Yeast)).